A 1157-amino-acid chain; its full sequence is DNA-directed RNA polymerase subunit beta (1157 aa).

This sequence belongs to the RNA polymerase beta chain family. As to quaternary structure, the RNAP catalytic core consists of 2 alpha, 1 beta, 1 beta' and 1 omega subunit. When a sigma factor is associated with the core the holoenzyme is formed, which can initiate transcription.

The catalysed reaction is RNA(n) + a ribonucleoside 5'-triphosphate = RNA(n+1) + diphosphate. Functionally, DNA-dependent RNA polymerase catalyzes the transcription of DNA into RNA using the four ribonucleoside triphosphates as substrates. The chain is DNA-directed RNA polymerase subunit beta from Tropheryma whipplei (Whipple's bacillus).